The chain runs to 360 residues: Phenylalanine--tRNA ligase alpha subunit (360 aa).

E260 is a binding site for Mg(2+).

It belongs to the class-II aminoacyl-tRNA synthetase family. Phe-tRNA synthetase alpha subunit type 1 subfamily. In terms of assembly, tetramer of two alpha and two beta subunits. Mg(2+) is required as a cofactor.

It localises to the cytoplasm. The catalysed reaction is tRNA(Phe) + L-phenylalanine + ATP = L-phenylalanyl-tRNA(Phe) + AMP + diphosphate + H(+). The sequence is that of Phenylalanine--tRNA ligase alpha subunit from Rhodopseudomonas palustris (strain ATCC BAA-98 / CGA009).